Consider the following 273-residue polypeptide: Large ribosomal subunit protein uL2 (273 aa).

A disordered region spans residues 228 to 273 (VDHPHGGGEGKTSGGRHPVTPWGFPTKGKKTRKNKRTSKFIVKKRK). Positions 254 to 273 (KGKKTRKNKRTSKFIVKKRK) are enriched in basic residues.

The protein belongs to the universal ribosomal protein uL2 family. In terms of assembly, part of the 50S ribosomal subunit. Forms a bridge to the 30S subunit in the 70S ribosome.

Its function is as follows. One of the primary rRNA binding proteins. Required for association of the 30S and 50S subunits to form the 70S ribosome, for tRNA binding and peptide bond formation. It has been suggested to have peptidyltransferase activity; this is somewhat controversial. Makes several contacts with the 16S rRNA in the 70S ribosome. The protein is Large ribosomal subunit protein uL2 of Rickettsia rickettsii (strain Iowa).